The sequence spans 97 residues: U6-theraphotoxin-Hhn1a 4 (97 aa).

The signal sequence occupies residues 1-33 (MLIKQFSRRSKNMKVQILLAFAALFVLAVGSYA). Residues 34-61 (SESKKLDLRDALLSAMFSADYQLNPQER) constitute a propeptide that is removed on maturation. Disulfide bonds link C63/C77, C70/C82, and C76/C89.

The protein belongs to the neurotoxin 10 (Hwtx-1) family. 12 (Hntx-12) subfamily. As to expression, expressed by the venom gland.

The protein localises to the secreted. Its function is as follows. Ion channel inhibitor. The chain is U6-theraphotoxin-Hhn1a 4 from Cyriopagopus hainanus (Chinese bird spider).